The primary structure comprises 487 residues: Serine/threonine-protein kinase 4 (487 aa).

Methionine 1 is subject to N-acetylmethionine. A Phosphothreonine modification is found at threonine 3. Residues 30 to 281 enclose the Protein kinase domain; it reads FDVLEKLGEG…ATQLLQHPFV (252 aa). Residues 36-44 and lysine 59 each bind ATP; that span reads LGEGSYGSV. Catalysis depends on aspartate 149, which acts as the Proton acceptor. The residue at position 183 (threonine 183) is a Phosphothreonine; by autocatalysis. A Phosphoserine modification is found at serine 265. The stretch at 290–310 forms a coiled coil; the sequence is LRDLINEAMDVKLKRQESQQR. Residues 303–312 are compositionally biased toward basic and acidic residues; that stretch reads KRQESQQREV. Residues 303 to 332 form a disordered region; it reads KRQESQQREVDQDDEENSEEDEMDSGTMVR. The segment covering 313–326 has biased composition (acidic residues); sequence DQDDEENSEEDEMD. Position 320 is a phosphoserine (serine 320). A phosphothreonine mark is found at threonine 340 and threonine 367. Threonine 387 is subject to Phosphothreonine; by PKB/AKT1. Residues serine 410 and serine 414 each carry the phosphoserine modification. Tyrosine 433 is subject to Phosphotyrosine. The 48-residue stretch at 433–480 folds into the SARAH domain; it reads YEFLKSWTVEDLQKRLLALDPMMEQEIEEIRQKYQSKRQPILDAIEAK.

Belongs to the protein kinase superfamily. STE Ser/Thr protein kinase family. STE20 subfamily. Homodimer; mediated via the coiled-coil region. Interacts with NORE1, which inhibits autoactivation. Interacts with and stabilizes SAV1. Interacts with RASSF1. Interacts with FOXO3. Interacts with RASSF2 (via SARAH domain). Interacts with AR, PKB/AKT1, TNNI3 and SIRT1. Interacts with DLG5 (via PDZ domain 3). Interacts with MARK3 and SCRIB in the presence of DLG5. Mg(2+) serves as cofactor. Post-translationally, autophosphorylated on serine and threonine residues. Phosphorylation at Thr-387 by PKB/AKT1, leads to inhibition of its: kinase activity, nuclear translocation and autophosphorylation at Thr-183. It also diminishes its cleavage by caspases and its ability to phosphorylate FOXO3. In terms of processing, proteolytically cleaved by caspase-3 during apoptosis at Asp-326 and Asp-349 resulting in a 37 kDa or a 39 kDa subunit respectively. The 39 kDa subunit is further cleaved into the 37 kDa form. Proteolytic cleavage results in kinase activation and nuclear translocation of the truncated form (MST1/N). It is less likely that cleavage at Asp-349 is a prerequisite for activation as this site is not conserved in the murine ortholog.

It localises to the cytoplasm. It is found in the nucleus. The enzyme catalyses L-seryl-[protein] + ATP = O-phospho-L-seryl-[protein] + ADP + H(+). It carries out the reaction L-threonyl-[protein] + ATP = O-phospho-L-threonyl-[protein] + ADP + H(+). Inhibited by the C-terminal non-catalytic region. Activated by caspase-cleavage. Full activation also requires homodimerization and autophosphorylation of Thr-183. Activated by RASSF1 which acts by preventing its dephosphorylation. Its function is as follows. Stress-activated, pro-apoptotic kinase which, following caspase-cleavage, enters the nucleus and induces chromatin condensation followed by internucleosomal DNA fragmentation. Key component of the Hippo signaling pathway which plays a pivotal role in organ size control and tumor suppression by restricting proliferation and promoting apoptosis. The core of this pathway is composed of a kinase cascade wherein STK3/MST2 and STK4/MST1, in complex with its regulatory protein SAV1, phosphorylates and activates LATS1/2 in complex with its regulatory protein MOB1, which in turn phosphorylates and inactivates YAP1 oncoprotein and WWTR1/TAZ. Phosphorylation of YAP1 by LATS2 inhibits its translocation into the nucleus to regulate cellular genes important for cell proliferation, cell death, and cell migration. STK3/MST2 and STK4/MST1 are required to repress proliferation of mature hepatocytes, to prevent activation of facultative adult liver stem cells (oval cells), and to inhibit tumor formation. Phosphorylates 'Ser-14' of histone H2B (H2BS14ph) during apoptosis. Phosphorylates FOXO3 upon oxidative stress, which results in its nuclear translocation and cell death initiation. Phosphorylates MOBKL1A, MOBKL1B and RASSF2. Phosphorylates TNNI3 (cardiac Tn-I) and alters its binding affinity to TNNC1 (cardiac Tn-C) and TNNT2 (cardiac Tn-T). Phosphorylates FOXO1 on 'Ser-212' and regulates its activation and stimulates transcription of PMAIP1 in a FOXO1-dependent manner. Phosphorylates SIRT1 and inhibits SIRT1-mediated p53/TP53 deacetylation, thereby promoting p53/TP53 dependent transcription and apoptosis upon DNA damage. Acts as an inhibitor of PKB/AKT1. Phosphorylates AR on 'Ser-650' and suppresses its activity by intersecting with PKB/AKT1 signaling and antagonizing formation of AR-chromatin complexes. In Chlorocebus aethiops (Green monkey), this protein is Serine/threonine-protein kinase 4 (STK4).